The sequence spans 860 residues: MSKINMNEDIDKDFSSHTPMMQQYLKLKAQHPEILLFYRMGDFYELFYDDAKRASQLLDISLTKRGASAGEPIPMAGIPHHAVENYLAKLVNQGESVAICEQIGDPATSKGPVERKVVRIVTPGTISDEALLQERQDNLLAAIWQDGKGYGYATLDISSGRFRLSEPADRETMAAELQRTNPAELLYAEDFAEMALIEGRRGLRRRPLWEFEIDTARQQLNLQFGTRDLVGFGVENASRGLCAAGCLLQYVKDTQRTSLPHIRSITMERQQDSIIMDAATRRNLEITQNLAGGIENTLAAVLDCTVTPMGSRMLKRWLHMPIRNTDILRERQQTIGALQDTVSELQPVLRQVGDLERILARLALRTARPRDLARMRHAFQQLPELHAQLETVDSAPVQALRKKMGDFAELRDLLERAIIDAPPVLVRDGGVIAPGYHQELDEWRALADGATDYLDRLEIRERERTGLDTLKVGYNAVHGYYIQISRGQSHLAPINYVRRQTLKNAERYIIPELKEYEDKVLTSKGKALALEKQLYDELFDLLLPHLADLQQSASALAELDVLVNLAERAYTLNYTCPTFTDKPGIRIIEGRHPVVEQVLNEPFIANPLNLSPQRRMLIITGPNMGGKSTYMRQTALIALLAWIGSYVPAQNVEIGPIDRIFTRVGAADDLASGRSTFMVEMTETANILHNATENSLVLMDEIGRGTSTYDGLSLAWACAENLANKIKALTLFATHYFELTQLPEKMEGVANVHLDALEHGDTIAFMHSVQDGAASKSYGLAVAALAGVPKEVIKRARQKLRELESISPNAAATQVDGTQMSLLAAPEETSPAVEALENLDPDSLTPRQALEWIYRLKSLV.

Residue 621–628 (GPNMGGKS) participates in ATP binding.

This sequence belongs to the DNA mismatch repair MutS family.

This protein is involved in the repair of mismatches in DNA. It is possible that it carries out the mismatch recognition step. This protein has a weak ATPase activity. The sequence is that of DNA mismatch repair protein MutS from Salmonella arizonae (strain ATCC BAA-731 / CDC346-86 / RSK2980).